The sequence spans 238 residues: Pyridoxine 5'-phosphate synthase (238 aa).

Asn6 contacts 3-amino-2-oxopropyl phosphate. 8–9 lines the 1-deoxy-D-xylulose 5-phosphate pocket; it reads DH. Arg17 serves as a coordination point for 3-amino-2-oxopropyl phosphate. Catalysis depends on His42, which acts as the Proton acceptor. 1-deoxy-D-xylulose 5-phosphate-binding residues include Arg44 and His49. The active-site Proton acceptor is the Glu69. Position 99 (Thr99) interacts with 1-deoxy-D-xylulose 5-phosphate. Residue His186 is the Proton donor of the active site. 3-amino-2-oxopropyl phosphate contacts are provided by residues Gly187 and 208 to 209; that span reads GH.

The protein belongs to the PNP synthase family. As to quaternary structure, homooctamer; tetramer of dimers.

Its subcellular location is the cytoplasm. The enzyme catalyses 3-amino-2-oxopropyl phosphate + 1-deoxy-D-xylulose 5-phosphate = pyridoxine 5'-phosphate + phosphate + 2 H2O + H(+). It participates in cofactor biosynthesis; pyridoxine 5'-phosphate biosynthesis; pyridoxine 5'-phosphate from D-erythrose 4-phosphate: step 5/5. Catalyzes the complicated ring closure reaction between the two acyclic compounds 1-deoxy-D-xylulose-5-phosphate (DXP) and 3-amino-2-oxopropyl phosphate (1-amino-acetone-3-phosphate or AAP) to form pyridoxine 5'-phosphate (PNP) and inorganic phosphate. The protein is Pyridoxine 5'-phosphate synthase of Anaplasma marginale (strain St. Maries).